The chain runs to 426 residues: uncharacterized protein (426 aa).

3 Solcar repeats span residues 125-216 (KNNV…MKRV), 226-315 (HSPL…LKRT), and 334-422 (PNGL…CKKW). Transmembrane regions (helical) follow at residues 130 to 151 (YFIS…LDRL), 193 to 213 (GINV…YEAM), 229 to 249 (LYSY…IYPV), 290 to 310 (GVLV…GTFE), 336 to 356 (GLVM…VFPL), and 394 to 415 (LYKG…SYLV).

The protein belongs to the mitochondrial carrier (TC 2.A.29) family.

The protein localises to the mitochondrion inner membrane. This is an uncharacterized protein from Schizosaccharomyces pombe (strain 972 / ATCC 24843) (Fission yeast).